A 198-amino-acid polypeptide reads, in one-letter code: Cyclotides mra4/mra5 (198 aa).

Residues 1-22 form the signal peptide; sequence MESNKMVVGVLLIAAFALPALA. Positions 23–79 are excised as a propeptide; that stretch reads LFERDVITHETIEAVLKKSTPNSNTMLQEDAINALTGKTLISQTILEETLLKNGVVG. Intrachain disulfides connect Cys-84/Cys-100, Cys-88/Cys-102, and Cys-93/Cys-107. The propeptide occupies 111 to 163; sequence SLALPTLEKDVITPEALEAVLKSNGGAIVNTKTIISNAIFEETLLNNANHVLG. 3 disulfide bridges follow: Cys-167–Cys-183, Cys-171–Cys-185, and Cys-176–Cys-190. Positions 194-198 are excised as a propeptide; that stretch reads SLALN.

The protein belongs to the cyclotide family. Bracelet subfamily. These are cyclic peptides. Post-translationally, the mature peptides contain 3 disulfide bonds each.

Functionally, probably participates in a plant defense mechanism. This Melicytus ramiflorus (Whitey wood) protein is Cyclotides mra4/mra5.